The following is a 467-amino-acid chain: Neutrophil collagenase (467 aa).

The first 20 residues, 1–20 (MFSLKTLPFLLLLHVQISKA), serve as a signal peptide directing secretion. A propeptide spans 21 to 100 (FPVSSKEKNT…CGVPDSGGFM (80 aa)) (activation peptide). N-linked (GlcNAc...) asparagine glycosylation is found at Asn-54 and Asn-73. A Cysteine switch motif is present at residues 89–96 (PRCGVPDS). Residue Cys-91 coordinates Zn(2+). Asn-112 carries N-linked (GlcNAc...) asparagine glycosylation. Residue Asp-157 participates in Ca(2+) binding. The Zn(2+) site is built by His-167 and Asp-169. 4 residues coordinate Ca(2+): Asp-174, Gly-175, Asn-177, and Ile-179. His-182 provides a ligand contact to Zn(2+). Residues Gly-189, Gly-191, and Asp-193 each coordinate Ca(2+). His-195 is a Zn(2+) binding site. 2 residues coordinate Ca(2+): Asp-197 and Glu-200. Asn-204 carries an N-linked (GlcNAc...) asparagine glycan. A Zn(2+)-binding site is contributed by His-217. Glu-218 is a catalytic residue. Positions 221 and 227 each coordinate Zn(2+). An N-linked (GlcNAc...) asparagine glycan is attached at Asn-246. 4 Hemopexin repeats span residues 276 to 325 (PKPC…WPSL), 326 to 372 (PTGI…GFPS), 374 to 420 (VQAI…FPGI), and 421 to 464 (ESKV…WLNC). Cys-279 and Cys-464 are disulfide-bonded. Asp-286 contacts Ca(2+). Residues Asp-378 and Asp-425 each coordinate Ca(2+).

This sequence belongs to the peptidase M10A family. It depends on Ca(2+) as a cofactor. The cofactor is Zn(2+). Neutrophils.

It is found in the cytoplasmic granule. The protein resides in the secreted. The protein localises to the extracellular space. Its subcellular location is the extracellular matrix. The enzyme catalyses Cleavage of interstitial collagens in the triple helical domain. Unlike EC 3.4.24.7, this enzyme cleaves type III collagen more slowly than type I.. Cannot be activated without removal of the activation peptide. Its function is as follows. Can degrade fibrillar type I, II, and III collagens. This chain is Neutrophil collagenase (MMP8), found in Homo sapiens (Human).